The chain runs to 84 residues: Cytochrome b559 subunit alpha (84 aa).

Residues 22 to 36 traverse the membrane as a helical segment; it reads IIHSITIPSLFVAGF. His-24 is a binding site for heme.

This sequence belongs to the PsbE/PsbF family. In terms of assembly, heterodimer of an alpha subunit and a beta subunit. PSII is composed of 1 copy each of membrane proteins PsbA, PsbB, PsbC, PsbD, PsbE, PsbF, PsbH, PsbI, PsbJ, PsbK, PsbL, PsbM, PsbT, PsbX, PsbY, PsbZ, Psb30/Ycf12, at least 3 peripheral proteins of the oxygen-evolving complex and a large number of cofactors. It forms dimeric complexes. It depends on heme b as a cofactor.

It is found in the plastid. The protein resides in the chloroplast thylakoid membrane. Its function is as follows. This b-type cytochrome is tightly associated with the reaction center of photosystem II (PSII). PSII is a light-driven water:plastoquinone oxidoreductase that uses light energy to abstract electrons from H(2)O, generating O(2) and a proton gradient subsequently used for ATP formation. It consists of a core antenna complex that captures photons, and an electron transfer chain that converts photonic excitation into a charge separation. The sequence is that of Cytochrome b559 subunit alpha from Emiliania huxleyi (Coccolithophore).